Reading from the N-terminus, the 25-residue chain is NVDFNSESTRRKKKQKEIVDLXNSL.

Residues Asn1–Leu25 are disordered.

This sequence belongs to the CRISP family. In terms of processing, contains 8 disulfide bonds. As to expression, expressed by the venom gland.

It localises to the secreted. In Naja haje haje (Egyptian cobra), this protein is Cysteine-rich venom protein 25.